The chain runs to 345 residues: Holliday junction branch migration complex subunit RuvB (345 aa).

A large ATPase domain (RuvB-L) region spans residues 4-194 (TDKLFGAAPE…FGIVARLEFY (191 aa)). ATP contacts are provided by residues Leu33, Arg34, Gly75, Lys78, Thr79, Thr80, 141 to 143 (EDY), Arg184, Tyr194, and Arg231. Thr79 provides a ligand contact to Mg(2+). The small ATPAse domain (RuvB-S) stretch occupies residues 195–265 (NAEELTRIVS…VADAALAMLD (71 aa)). Residues 268 to 345 (PAGLDVMDRK…LHFGLPVKDA (78 aa)) are head domain (RuvB-H). Positions 323 and 328 each coordinate DNA.

This sequence belongs to the RuvB family. In terms of assembly, homohexamer. Forms an RuvA(8)-RuvB(12)-Holliday junction (HJ) complex. HJ DNA is sandwiched between 2 RuvA tetramers; dsDNA enters through RuvA and exits via RuvB. An RuvB hexamer assembles on each DNA strand where it exits the tetramer. Each RuvB hexamer is contacted by two RuvA subunits (via domain III) on 2 adjacent RuvB subunits; this complex drives branch migration. In the full resolvosome a probable DNA-RuvA(4)-RuvB(12)-RuvC(2) complex forms which resolves the HJ.

Its subcellular location is the cytoplasm. It catalyses the reaction ATP + H2O = ADP + phosphate + H(+). The RuvA-RuvB-RuvC complex processes Holliday junction (HJ) DNA during genetic recombination and DNA repair, while the RuvA-RuvB complex plays an important role in the rescue of blocked DNA replication forks via replication fork reversal (RFR). RuvA specifically binds to HJ cruciform DNA, conferring on it an open structure. The RuvB hexamer acts as an ATP-dependent pump, pulling dsDNA into and through the RuvAB complex. RuvB forms 2 homohexamers on either side of HJ DNA bound by 1 or 2 RuvA tetramers; 4 subunits per hexamer contact DNA at a time. Coordinated motions by a converter formed by DNA-disengaged RuvB subunits stimulates ATP hydrolysis and nucleotide exchange. Immobilization of the converter enables RuvB to convert the ATP-contained energy into a lever motion, pulling 2 nucleotides of DNA out of the RuvA tetramer per ATP hydrolyzed, thus driving DNA branch migration. The RuvB motors rotate together with the DNA substrate, which together with the progressing nucleotide cycle form the mechanistic basis for DNA recombination by continuous HJ branch migration. Branch migration allows RuvC to scan DNA until it finds its consensus sequence, where it cleaves and resolves cruciform DNA. The polypeptide is Holliday junction branch migration complex subunit RuvB (Chromobacterium violaceum (strain ATCC 12472 / DSM 30191 / JCM 1249 / CCUG 213 / NBRC 12614 / NCIMB 9131 / NCTC 9757 / MK)).